A 276-amino-acid chain; its full sequence is uncharacterized protein (276 aa).

This is an uncharacterized protein from Methanocaldococcus jannaschii (strain ATCC 43067 / DSM 2661 / JAL-1 / JCM 10045 / NBRC 100440) (Methanococcus jannaschii).